The chain runs to 358 residues: Probable ABC transporter periplasmic-binding protein y4fP (358 aa).

Residues 1–46 (MRNVIKLTWSRRKRSASLDKGENIMKLAFAFATAAIVVAAAFPALA) form the signal peptide.

Belongs to the bacterial solute-binding protein 1 family.

It is found in the periplasm. Functionally, probably part of the binding-protein-dependent transport system y4fNOP. The protein is Probable ABC transporter periplasmic-binding protein y4fP of Sinorhizobium fredii (strain NBRC 101917 / NGR234).